A 199-amino-acid polypeptide reads, in one-letter code: Imidazoleglycerol-phosphate dehydratase (199 aa).

The protein belongs to the imidazoleglycerol-phosphate dehydratase family.

The protein resides in the cytoplasm. It carries out the reaction D-erythro-1-(imidazol-4-yl)glycerol 3-phosphate = 3-(imidazol-4-yl)-2-oxopropyl phosphate + H2O. Its pathway is amino-acid biosynthesis; L-histidine biosynthesis; L-histidine from 5-phospho-alpha-D-ribose 1-diphosphate: step 6/9. This is Imidazoleglycerol-phosphate dehydratase from Desulfotalea psychrophila (strain LSv54 / DSM 12343).